A 393-amino-acid polypeptide reads, in one-letter code: Dual-specificity RNA methyltransferase RlmN (393 aa).

Glu-114 functions as the Proton acceptor in the catalytic mechanism. A Radical SAM core domain is found at 120–359 (EDDRATLCVS…VIVRKTRGDD (240 aa)). A disulfide bond links Cys-127 and Cys-364. 3 residues coordinate [4Fe-4S] cluster: Cys-134, Cys-138, and Cys-141. Residues 188–189 (GE), Ser-220, 242–244 (SLH), and Asn-321 contribute to the S-adenosyl-L-methionine site. The active-site S-methylcysteine intermediate is the Cys-364.

The protein belongs to the radical SAM superfamily. RlmN family. The cofactor is [4Fe-4S] cluster.

The protein resides in the cytoplasm. It carries out the reaction adenosine(2503) in 23S rRNA + 2 reduced [2Fe-2S]-[ferredoxin] + 2 S-adenosyl-L-methionine = 2-methyladenosine(2503) in 23S rRNA + 5'-deoxyadenosine + L-methionine + 2 oxidized [2Fe-2S]-[ferredoxin] + S-adenosyl-L-homocysteine. It catalyses the reaction adenosine(37) in tRNA + 2 reduced [2Fe-2S]-[ferredoxin] + 2 S-adenosyl-L-methionine = 2-methyladenosine(37) in tRNA + 5'-deoxyadenosine + L-methionine + 2 oxidized [2Fe-2S]-[ferredoxin] + S-adenosyl-L-homocysteine. Specifically methylates position 2 of adenine 2503 in 23S rRNA and position 2 of adenine 37 in tRNAs. m2A2503 modification seems to play a crucial role in the proofreading step occurring at the peptidyl transferase center and thus would serve to optimize ribosomal fidelity. The sequence is that of Dual-specificity RNA methyltransferase RlmN from Actinobacillus pleuropneumoniae serotype 5b (strain L20).